The sequence spans 621 residues: ATP-dependent lipid A-core flippase (621 aa).

Transmembrane regions (helical) follow at residues 32–52 (IVAALIAIFGVAATESYLAAF), 91–111 (VWGTENKIWTVPLFLIILVVI), 192–212 (IVLLYLNWQLSLIVVLMFPLL), 286–306 (SPFSELIASIALAVVIFIALW), and 312–332 (YTTIGEFMAFIVAMLQMYAPI). The ABC transmembrane type-1 domain maps to 33-344 (VAALIAIFGV…LANISIPMQT (312 aa)). The 234-residue stretch at 378–611 (FRNVDVEYRS…NGYYTMLRNI (234 aa)) folds into the ABC transporter domain. ATP is bound at residue 410-417 (GRSGSGKS).

This sequence belongs to the ABC transporter superfamily. Lipid exporter (TC 3.A.1.106) family. Homodimer.

It localises to the cell inner membrane. It catalyses the reaction ATP + H2O + lipid A-core oligosaccharideSide 1 = ADP + phosphate + lipid A-core oligosaccharideSide 2.. Its function is as follows. Involved in lipopolysaccharide (LPS) biosynthesis. Translocates lipid A-core from the inner to the outer leaflet of the inner membrane. Transmembrane domains (TMD) form a pore in the inner membrane and the ATP-binding domain (NBD) is responsible for energy generation. The sequence is that of ATP-dependent lipid A-core flippase from Neisseria meningitidis serogroup B (strain ATCC BAA-335 / MC58).